The chain runs to 1059 residues: Disks large-associated protein 2 (1059 aa).

Disordered regions lie at residues 31–54 and 245–311; these read GEPE…PAEE and KSHS…SDST. Residues 245-261 show a composition bias toward polar residues; it reads KSHSLEGSSKSNINGTK. Positions 262–271 are enriched in basic and acidic residues; it reads SDSRVDDHHQ. The span at 272–285 shows a compositional bias: basic residues; it reads SHLSKHSKRSKSKE. S302, S308, S390, and S456 each carry phosphoserine. The segment at 613–669 is disordered; that stretch reads YKKTPPPVPPRTTSKPLISVTAQSSTESTQDAYQDSRAQRMSPWPQDSRGGLYNSMD. Polar residues predominate over residues 632–645; the sequence is VTAQSSTESTQDAY. 4 positions are modified to phosphoserine: S667, S670, S673, and S720. The segment at 723–756 is disordered; the sequence is VQDSEFPDHQPYPRSDVETATDSDTESRGLREYH. The residue at position 743 (T743) is a Phosphothreonine. A Phosphoserine modification is found at S745. A compositionally biased stretch (basic and acidic residues) spans 747–756; the sequence is TESRGLREYH. Residues S776, S811, S983, and S1012 each carry the phosphoserine modification. The segment at 985–1025 is disordered; the sequence is ERKEERKIPPPIPKKPPKGKFPITREKSLDLPDRQRQEARR. Residues 1007–1025 are compositionally biased toward basic and acidic residues; sequence ITREKSLDLPDRQRQEARR.

This sequence belongs to the SAPAP family. In terms of assembly, interacts with DLG4/PSD-95. As to expression, expressed in various brain areas.

The protein localises to the cell membrane. The protein resides in the postsynaptic density. It is found in the synapse. May play a role in the molecular organization of synapses and neuronal cell signaling. Could be an adapter protein linking ion channel to the subsynaptic cytoskeleton. May induce enrichment of PSD-95/SAP90 at the plasma membrane. This is Disks large-associated protein 2 from Mus musculus (Mouse).